The following is an 895-amino-acid chain: MNFRRMLCAAIVLTIVLSIMLPSTVFALEDKSSKLPDYKNDLLYERTFDEGLCFPWHTCEDSGGKCDFAVVDVPGEPGNKAFRLTVIDKGQNKWSVQMRHRGITLEQGHTYTVRFTIWSDKSCRVYAKIGQMGEPYTEYWNNNWNPFNLTPGQKLTVEQNFTMNYPTDDTCEFTFHLGGELAAGTPYYVYLDDVSLYDPRFVKPVEYVLPQPDVRVNQVGYLPFAKKYATVVSSSTSPLKWQLLNSANQVVLEGNTIPKGLDKDSQDYVHWIDFSNFKTEGKGYYFKLPTVNSDTNYSHPFDISADIYSKMKFDALAFFYHKRSGIPIEMPYAGGEQWTRPAGHIGIEPNKGDTNVPTWPQDDEYAGRPQKYYTKDVTGGWYDAGDHGKYVVNGGIAVWTLMNMYERAKIRGIANQGAYKDGGMNIPERNNGYPDILDEARWEIEFFKKMQVTEKEDPSIAGMVHHKIHDFRWTALGMLPHEDPQPRYLRPVSTAATLNFAATLAQSARLWKDYDPTFAADCLEKAEIAWQAALKHPDIYAEYTPGSGGPGGGPYNDDYVGDEFYWAACELYVTTGKDEYKNYLMNSPHYLEMPAKMGENGGANGEDNGLWGCFTWGTTQGLGTITLALVENGLPATDIQKARNNIAKAADRWLENIEEQGYRLPIKQAEDERGGYPWGSNSFILNQMIVMGYAYDFTGNSKYLDGMQDGMSYLLGRNGLDQSYVTGYGERPLQNPHDRFWTPQTSKKFPAPPPGIIAGGPNSRFEDPTITAAVKKDTPPQKCYIDHTDSWSTNEITVNWNAPFAWVTAYLDEIDLITPPGGVDPEEPEVIYGDCNGDGKVNSTDAVALKRYILRSGISINTDNADVNADGRVNSTDLAILKRYILKEIDVLPHK.

A signal peptide spans 1 to 27 (MNFRRMLCAAIVLTIVLSIMLPSTVFA). In terms of domain architecture, CBM-cenC spans 40 to 199 (NDLLYERTFD…YLDDVSLYDP (160 aa)). Residues 199–240 (PRFVKPVEYVLPQPDVRVNQVGYLPFAKKYATVVSSSTSPLK) form a linker region. The catalytic stretch occupies residues 241-815 (WQLLNSANQV…WVTAYLDEID (575 aa)). Aspartate 386 functions as the Nucleophile in the catalytic mechanism. Active-site residues include histidine 737, aspartate 786, and glutamate 795. Residues 828–894 (PEVIYGDCNG…ILKEIDVLPH (67 aa)) form the Dockerin domain.

The protein belongs to the glycosyl hydrolase 9 (cellulase E) family.

It localises to the secreted. The catalysed reaction is Hydrolysis of (1-&gt;4)-beta-D-glucosidic linkages in cellulose and cellotetraose, releasing cellobiose from the non-reducing ends of the chains.. Inhibited by cellobiose. This chain is Cellulose 1,4-beta-cellobiosidase (celK), found in Acetivibrio thermocellus (Hungateiclostridium thermocellum).